The primary structure comprises 189 residues: Transcription factor E (189 aa).

Residues 9-101 (AVKSLEIYVR…FWRIDSDTIN (93 aa)) form the HTH TFE/IIEalpha-type domain.

Belongs to the TFE family. Monomer. Interaction with RNA polymerase subunits RpoF and RpoE is necessary for Tfe stimulatory transcription activity. Able to interact with Tbp and RNA polymerase in the absence of DNA promoter. Interacts both with the preinitiation and elongation complexes.

Functionally, transcription factor that plays a role in the activation of archaeal genes transcribed by RNA polymerase. Facilitates transcription initiation by enhancing TATA-box recognition by TATA-box-binding protein (Tbp), and transcription factor B (Tfb) and RNA polymerase recruitment. Not absolutely required for transcription in vitro, but particularly important in cases where Tbp or Tfb function is not optimal. It dynamically alters the nucleic acid-binding properties of RNA polymerases by stabilizing the initiation complex and destabilizing elongation complexes. Seems to translocate with the RNA polymerase following initiation and acts by binding to the non template strand of the transcription bubble in elongation complexes. This chain is Transcription factor E, found in Aeropyrum pernix (strain ATCC 700893 / DSM 11879 / JCM 9820 / NBRC 100138 / K1).